We begin with the raw amino-acid sequence, 839 residues long: Autophagy-related protein 9A (839 aa).

Residue A2 is modified to N-acetylalanine. Over 2-61 the chain is Cytoplasmic; the sequence is AQFDTEYQRLEASYSDSPPGEEDLLVHVAEGSKSPWHHIENLDLFFSRVYNLHQKNGFTC. A Tyrosine-based sorting signal motif is present at residues 8–11; that stretch reads YQRL. 3 positions are modified to phosphoserine: S14, S16, and S18. The helical transmembrane segment at 62 to 84 threads the bilayer; the sequence is MLIGEIFELMQFLFVVAFTTFLV. Over 85 to 128 the chain is Lumenal; that stretch reads SCVDYDILFANKMVNHSLHPTEPVKVTLPDAFLPAQVCSARIQE. A glycan (N-linked (GlcNAc...) asparagine) is linked at N99. A helical transmembrane segment spans residues 129–154; the sequence is NGSLITILVIAGVFWIHRLIKFIYNI. Topologically, residues 155–290 are cytoplasmic; sequence CCYWEIHSFY…ELAQRLSNRI (136 aa). An intramembrane segment occupies 291 to 301; sequence LWIGIANFLLC. The Cytoplasmic segment spans residues 302–319; it reads PLILIWQILYAFFSYAEV. The stretch at 320-328 is an intramembrane region; that stretch reads LKREPGALG. Residues 329–371 lie on the Cytoplasmic side of the membrane; the sequence is ARCWSLYGRCYLRHFNELEHELQSRLNRGYKPASKYMNCFLSP. The helical transmembrane segment at 372–397 threads the bilayer; the sequence is LLTLLAKNGAFFAGSILAVLIALTIY. Topologically, residues 398–406 are lumenal; that stretch reads DEDVLAVEH. A helical membrane pass occupies residues 407–424; it reads VLTTVTLLGVTVTVCRSF. The Cytoplasmic portion of the chain corresponds to 425–470; the sequence is IPDQHMVFCPEQLLRVILAHIHYMPDHWQGNAHRSQTRDEFAQLFQ. The stretch at 471 to 480 is an intramembrane region; it reads YKAVFILEEL. Over 481–483 the chain is Cytoplasmic; sequence LSP. An intramembrane segment occupies 484 to 492; sequence IVTPLILIF. Residues 493 to 839 are Cytoplasmic-facing; that stretch reads CLRPRALEII…DELPPQVHKV (347 aa). Residues S656, S735, S738, S741, and S828 each carry the phosphoserine modification. Disordered stretches follow at residues 656–689 and 717–839; these read SPLQ…SSVW and HKQQ…VHKV. Basic and acidic residues predominate over residues 724–736; sequence EPERHVWHRRESD. Acidic residues-rich tracts occupy residues 737–747 and 823–832; these read ESGESAPEEGG and VPEEGSEDEL.

This sequence belongs to the ATG9 family. As to quaternary structure, homotrimer; forms a homotrimer with a central pore that forms a path between the two membrane leaflets. Interacts (via cytoplasmic its C-terminus) with ATG2A. Interacts with SUPT20H. Interacts (via the tyrosine-based sorting signal motif) with AP4M1; promoting association with the AP-4 complex. Interacts with ARFIP1 and ARFIP2. Interacts with PI4K2A and PI4KB. Interacts with ATG4A; the interaction is direct and promotes ATG9A trafficking. Ufmylated in a DDRGK1 dependent manner.

It localises to the preautophagosomal structure membrane. Its subcellular location is the cytoplasmic vesicle. The protein localises to the autophagosome membrane. The protein resides in the golgi apparatus. It is found in the trans-Golgi network membrane. It localises to the late endosome membrane. Its subcellular location is the recycling endosome membrane. The protein localises to the endoplasmic reticulum membrane. The protein resides in the mitochondrion membrane. It catalyses the reaction a 1,2-diacyl-sn-glycero-3-phosphocholine(in) = a 1,2-diacyl-sn-glycero-3-phosphocholine(out). The catalysed reaction is a 1,2-diacyl-sn-glycero-3-phospho-L-serine(in) = a 1,2-diacyl-sn-glycero-3-phospho-L-serine(out). It carries out the reaction a 1,2-diacyl-sn-glycero-3-phosphoethanolamine(in) = a 1,2-diacyl-sn-glycero-3-phosphoethanolamine(out). Its function is as follows. Phospholipid scramblase involved in autophagy by mediating autophagosomal membrane expansion. Cycles between the preautophagosomal structure/phagophore assembly site (PAS) and the cytoplasmic vesicle pool and supplies membrane for the growing autophagosome. Lipid scramblase activity plays a key role in preautophagosomal structure/phagophore assembly by distributing the phospholipids that arrive through ATG2 (ATG2A or ATG2B) from the cytoplasmic to the luminal leaflet of the bilayer, thereby driving autophagosomal membrane expansion. Also required to supply phosphatidylinositol 4-phosphate to the autophagosome initiation site by recruiting the phosphatidylinositol 4-kinase beta (PI4KB) in a process dependent on ARFIP2, but not ARFIP1. In addition to autophagy, also plays a role in necrotic cell death. The polypeptide is Autophagy-related protein 9A (Rattus norvegicus (Rat)).